Reading from the N-terminus, the 309-residue chain is MRLVFAGTPEPAVPSLRALIESANHEVAAVVTRPDAPAGRGRKLMRSPVGALADEHGIEVLTPAKASDPEFLARLRELEPECCPVVAYGALLRQTALDIPEHGWVNLHFSLLPAWRGAAPVQAAIKHGDQITGASTFRLVPELDAGPVYGVVTEEVRDTDTSGVLLERLSVSGAKLLVATLDGIADGTLRAEEQPADGVSYAPKVEVEDARVDFTAPARAVDRLVRSVTPDPGAWASFRDERLKLGPVSIVDEDLGLAPGEIRVERRRVLAGTGSAPVALGEVQAQGKKRMAATDWARGSRIEQGERLK.

110–113 (SLLP) is a (6S)-5,6,7,8-tetrahydrofolate binding site. The interval 289–309 (KRMAATDWARGSRIEQGERLK) is disordered. Over residues 298–309 (RGSRIEQGERLK) the composition is skewed to basic and acidic residues.

The protein belongs to the Fmt family.

It catalyses the reaction L-methionyl-tRNA(fMet) + (6R)-10-formyltetrahydrofolate = N-formyl-L-methionyl-tRNA(fMet) + (6S)-5,6,7,8-tetrahydrofolate + H(+). In terms of biological role, attaches a formyl group to the free amino group of methionyl-tRNA(fMet). The formyl group appears to play a dual role in the initiator identity of N-formylmethionyl-tRNA by promoting its recognition by IF2 and preventing the misappropriation of this tRNA by the elongation apparatus. The chain is Methionyl-tRNA formyltransferase from Saccharopolyspora erythraea (strain ATCC 11635 / DSM 40517 / JCM 4748 / NBRC 13426 / NCIMB 8594 / NRRL 2338).